A 533-amino-acid polypeptide reads, in one-letter code: CTP synthase (533 aa).

An amidoligase domain region spans residues 1–265; the sequence is MTKFIFVTGG…ARYLVRRLGL (265 aa). Ser13 lines the CTP pocket. Ser13 contributes to the UTP binding site. 14–19 is a binding site for ATP; the sequence is GLGKGI. Position 54 (Tyr54) interacts with L-glutamine. Residue Asp71 participates in ATP binding. Asp71 and Glu139 together coordinate Mg(2+). CTP-binding positions include 146–148, 186–191, and Lys222; these read DIE and KTKPTQ. Residues 186–191 and Lys222 each bind UTP; that span reads KTKPTQ. Positions 290–532 constitute a Glutamine amidotransferase type-1 domain; that stretch reads EIAIVGKYVK…VRAARERKYG (243 aa). Gly351 provides a ligand contact to L-glutamine. The Nucleophile; for glutamine hydrolysis role is filled by Cys378. Residues 379-382, Glu402, and Arg459 contribute to the L-glutamine site; that span reads FGFQ. Active-site residues include His505 and Glu507.

This sequence belongs to the CTP synthase family. Homotetramer.

It carries out the reaction UTP + L-glutamine + ATP + H2O = CTP + L-glutamate + ADP + phosphate + 2 H(+). The catalysed reaction is L-glutamine + H2O = L-glutamate + NH4(+). The enzyme catalyses UTP + NH4(+) + ATP = CTP + ADP + phosphate + 2 H(+). Its pathway is pyrimidine metabolism; CTP biosynthesis via de novo pathway; CTP from UDP: step 2/2. Allosterically activated by GTP, when glutamine is the substrate; GTP has no effect on the reaction when ammonia is the substrate. The allosteric effector GTP functions by stabilizing the protein conformation that binds the tetrahedral intermediate(s) formed during glutamine hydrolysis. Inhibited by the product CTP, via allosteric rather than competitive inhibition. In terms of biological role, catalyzes the ATP-dependent amination of UTP to CTP with either L-glutamine or ammonia as the source of nitrogen. Regulates intracellular CTP levels through interactions with the four ribonucleotide triphosphates. In Thermococcus gammatolerans (strain DSM 15229 / JCM 11827 / EJ3), this protein is CTP synthase.